The chain runs to 229 residues: Ribonuclease 3 (229 aa).

One can recognise an RNase III domain in the interval 3 to 125; the sequence is VNALQEKLGY…LIGGIFLDSN (123 aa). E38 contributes to the Mg(2+) binding site. The active site involves D42. Residues N111 and E114 each coordinate Mg(2+). E114 is an active-site residue. A DRBM domain is found at 155-225; it reads DPKTRLQEYM…AAKVLEALEH (71 aa).

Belongs to the ribonuclease III family. Homodimer. Requires Mg(2+) as cofactor.

The protein localises to the cytoplasm. The catalysed reaction is Endonucleolytic cleavage to 5'-phosphomonoester.. Its function is as follows. Digests double-stranded RNA. Involved in the processing of primary rRNA transcript to yield the immediate precursors to the large and small rRNAs (23S and 16S). Processes some mRNAs, and tRNAs when they are encoded in the rRNA operon. Processes pre-crRNA and tracrRNA of type II CRISPR loci if present in the organism. The sequence is that of Ribonuclease 3 from Blochmanniella pennsylvanica (strain BPEN).